We begin with the raw amino-acid sequence, 299 residues long: UDP-N-acetylenolpyruvoylglucosamine reductase (299 aa).

One can recognise an FAD-binding PCMH-type domain in the interval 31 to 192 (VGGVAEVVFK…VDATFVGACG (162 aa)). Arg172 is a catalytic residue. The active-site Proton donor is Ser221. The active site involves Glu291.

Belongs to the MurB family. The cofactor is FAD.

Its subcellular location is the cytoplasm. The enzyme catalyses UDP-N-acetyl-alpha-D-muramate + NADP(+) = UDP-N-acetyl-3-O-(1-carboxyvinyl)-alpha-D-glucosamine + NADPH + H(+). It participates in cell wall biogenesis; peptidoglycan biosynthesis. In terms of biological role, cell wall formation. This is UDP-N-acetylenolpyruvoylglucosamine reductase from Anaplasma marginale (strain St. Maries).